Consider the following 378-residue polypeptide: Erythronate-4-phosphate dehydrogenase (378 aa).

Positions 45 and 66 each coordinate substrate. Residues D146 and T175 each coordinate NAD(+). Residue R208 is part of the active site. D232 lines the NAD(+) pocket. E237 is a catalytic residue. The Proton donor role is filled by H254. NAD(+) is bound at residue G257. Y258 provides a ligand contact to substrate.

Belongs to the D-isomer specific 2-hydroxyacid dehydrogenase family. PdxB subfamily. As to quaternary structure, homodimer.

The protein localises to the cytoplasm. It carries out the reaction 4-phospho-D-erythronate + NAD(+) = (R)-3-hydroxy-2-oxo-4-phosphooxybutanoate + NADH + H(+). The protein operates within cofactor biosynthesis; pyridoxine 5'-phosphate biosynthesis; pyridoxine 5'-phosphate from D-erythrose 4-phosphate: step 2/5. Catalyzes the oxidation of erythronate-4-phosphate to 3-hydroxy-2-oxo-4-phosphonooxybutanoate. The polypeptide is Erythronate-4-phosphate dehydrogenase (Salmonella dublin (strain CT_02021853)).